The chain runs to 260 residues: Pyridoxine 5'-phosphate synthase (260 aa).

Residues Asn7 and Arg18 each contribute to the 3-amino-2-oxopropyl phosphate site. The active-site Proton acceptor is His43. The 1-deoxy-D-xylulose 5-phosphate site is built by Arg45 and His50. The active-site Proton acceptor is the Glu83. Thr113 serves as a coordination point for 1-deoxy-D-xylulose 5-phosphate. Catalysis depends on His208, which acts as the Proton donor. Residues Asp209 and 230-231 (GH) each bind 3-amino-2-oxopropyl phosphate.

The protein belongs to the PNP synthase family. Homooctamer; tetramer of dimers.

The protein resides in the cytoplasm. It catalyses the reaction 3-amino-2-oxopropyl phosphate + 1-deoxy-D-xylulose 5-phosphate = pyridoxine 5'-phosphate + phosphate + 2 H2O + H(+). It functions in the pathway cofactor biosynthesis; pyridoxine 5'-phosphate biosynthesis; pyridoxine 5'-phosphate from D-erythrose 4-phosphate: step 5/5. Its function is as follows. Catalyzes the complicated ring closure reaction between the two acyclic compounds 1-deoxy-D-xylulose-5-phosphate (DXP) and 3-amino-2-oxopropyl phosphate (1-amino-acetone-3-phosphate or AAP) to form pyridoxine 5'-phosphate (PNP) and inorganic phosphate. This Leptospira biflexa serovar Patoc (strain Patoc 1 / Ames) protein is Pyridoxine 5'-phosphate synthase.